Here is a 427-residue protein sequence, read N- to C-terminus: Endothelin-1 receptor (427 aa).

The N-terminal stretch at 1–20 (METLCLRASFWLALVGCVIS) is a signal peptide. Over 21–80 (DNPERYSTNLSNHVDDFTTFRGTELSFLVTTHQPTNLVLPSNGSMHNYCPQQTKITSAFK) the chain is Extracellular. N-linked (GlcNAc...) asparagine glycans are attached at residues Asn-29 and Asn-62. A helical membrane pass occupies residues 81–102 (YINTVISCTIFIVGMVGNATLL). Topologically, residues 103–112 (RIIYQNKCMR) are cytoplasmic. Residues 113-132 (NGPNALIASLALGDLIYVVI) form a helical membrane-spanning segment. The Extracellular portion of the chain corresponds to 133 to 159 (DLPINVFKLLAGRWPFDHNDFGVFLCK). A disulfide bridge connects residues Cys-158 and Cys-239. Residues 160 to 181 (LFPFLQKSSVGITVLNLCALSV) traverse the membrane as a helical segment. Over 182 to 205 (DRYRAVASWSRVQGIGIPLVTAIE) the chain is Cytoplasmic. The helical transmembrane segment at 206-229 (IVSIWILSFILAIPEAIGFVMVPF) threads the bilayer. The Extracellular portion of the chain corresponds to 230–256 (EYRGEQHKTCMLNATSKFMEFYQDVKD). Residues 257 to 278 (WWLFGFYFCMPLVCTAIFYTLM) form a helical membrane-spanning segment. The Cytoplasmic segment spans residues 279–306 (TCEMLNRRNGSLRIALSEHLKQRREVAK). Residues 307 to 328 (TVFCLVVIFALCWFPLHLSRIL) form a helical membrane-spanning segment. Topologically, residues 329-347 (KKTVYNEMDKNRCELLSFL) are extracellular. The chain crosses the membrane as a helical span at residues 348 to 372 (LLMDYIGINLATMNSCINPIALYFV). The Cytoplasmic portion of the chain corresponds to 373-427 (SKKFKNCFQSCLCCCCYQSKSLMTSVPMNGTSIQWKNHDQNNHNTDRSSHKDSMN). The disordered stretch occupies residues 406 to 427 (QWKNHDQNNHNTDRSSHKDSMN). Residues 408 to 427 (KNHDQNNHNTDRSSHKDSMN) show a composition bias toward basic and acidic residues. Ser-425 carries the phosphoserine modification.

This sequence belongs to the G-protein coupled receptor 1 family. Endothelin receptor subfamily. EDNRA sub-subfamily. In terms of assembly, interacts with HDAC7 and KAT5. As to expression, isoform 1, isoform 3 and isoform 4 are expressed in a variety of tissues, with highest levels in the aorta and cerebellum, followed by lung, atrium and cerebral cortex, lower levels in the placenta, kidney, adrenal gland, duodenum, colon, ventricle and liver but no expression in umbilical vein endothelial cells. Within the placenta, isoform 1, isoform 2, isoform 3 and isoform 4 are expressed in the villi and stem villi vessels.

The protein resides in the cell membrane. Receptor for endothelin-1. Mediates its action by association with G proteins that activate a phosphatidylinositol-calcium second messenger system. The rank order of binding affinities for ET-A is: ET1 &gt; ET2 &gt;&gt; ET3. This chain is Endothelin-1 receptor, found in Homo sapiens (Human).